Here is a 321-residue protein sequence, read N- to C-terminus: NADH-ubiquinone oxidoreductase chain 1 (321 aa).

The next 8 helical transmembrane spans lie at 6–26 (IVPP…LTAL), 67–87 (LLAT…LALA), 103–123 (LGLL…LWSG), 143–163 (ISYE…SGGF), 174–194 (PLYL…STLA), 220–240 (ASPF…MNTL), 256–276 (ALFT…FLWV), and 296–316 (FLPM…SMFG).

It belongs to the complex I subunit 1 family.

The protein localises to the mitochondrion inner membrane. The enzyme catalyses a ubiquinone + NADH + 5 H(+)(in) = a ubiquinol + NAD(+) + 4 H(+)(out). In terms of biological role, core subunit of the mitochondrial membrane respiratory chain NADH dehydrogenase (Complex I) that is believed to belong to the minimal assembly required for catalysis. Complex I functions in the transfer of electrons from NADH to the respiratory chain. The immediate electron acceptor for the enzyme is believed to be ubiquinone. This is NADH-ubiquinone oxidoreductase chain 1 (MT-ND1) from Alligator mississippiensis (American alligator).